The following is a 207-amino-acid chain: MTKKAESKELPPFEYPEGYQLFAGVDEVGRGPLVGAVVTAAVILDPNNPIEGLTDSKKLTDKKRELLFPEIQEKALAWSLGRCEAHEIDELNILQATMVAMQRAIAGLNITPDFALIDGNKVPELPMAGLAVVKGDLRVQEISAASIIAKVTRDREMEELDKAYPQYGFAKHKGYPTKAHFEAIEEHGVISEHRRSFKPVKRVLGIE.

Residues 20 to 207 (QLFAGVDEVG…KPVKRVLGIE (188 aa)) form the RNase H type-2 domain. A divalent metal cation is bound by residues aspartate 26, glutamate 27, and aspartate 118.

Belongs to the RNase HII family. Mn(2+) serves as cofactor. It depends on Mg(2+) as a cofactor.

The protein localises to the cytoplasm. It catalyses the reaction Endonucleolytic cleavage to 5'-phosphomonoester.. Functionally, endonuclease that specifically degrades the RNA of RNA-DNA hybrids. This chain is Ribonuclease HII, found in Aliivibrio fischeri (strain ATCC 700601 / ES114) (Vibrio fischeri).